An 817-amino-acid polypeptide reads, in one-letter code: tRNA(Met) cytidine acetyltransferase TmcA (817 aa).

ATP-binding positions include Gln265, 289 to 298 (GRGKSVSVGI), and Arg439. The region spanning 469-664 (ELIRKMEVYL…YTAIVIKPIS (196 aa)) is the N-acetyltransferase domain. Acetyl-CoA-binding positions include 589–591 (IAT), 596–602 (MDLGLGS), Glu629, and Arg636.

This sequence belongs to the RNA cytidine acetyltransferase family. TmcA subfamily.

The protein resides in the cytoplasm. The enzyme catalyses cytidine(34) in elongator tRNA(Met) + acetyl-CoA + ATP + H2O = N(4)-acetylcytidine(34) in elongator tRNA(Met) + ADP + phosphate + CoA + H(+). The catalysed reaction is a cytidine in RNA + acetyl-CoA + ATP + H2O = an N(4)-acetylcytidine in RNA + ADP + phosphate + CoA + H(+). It carries out the reaction a cytidine in tRNA + acetyl-CoA + ATP + H2O = an N(4)-acetylcytidine in tRNA + ADP + phosphate + CoA + H(+). It catalyses the reaction a cytidine in mRNA + acetyl-CoA + ATP + H2O = an N(4)-acetylcytidine in mRNA + ADP + phosphate + CoA + H(+). Its function is as follows. Catalyzes the formation of N(4)-acetylcytidine (ac(4)C) at the wobble position of tRNA(Met), by using acetyl-CoA as an acetyl donor and ATP (or GTP). Functionally, catalyzes the formation of N(4)-acetylcytidine (ac(4)C) sites in rRNA, tRNA, mRNA and non-coding (nc) RNA, almost always on the middle C of a CCG motif. In hyperthermophiles more acetylation is seen at higher temperatures. This chain is tRNA(Met) cytidine acetyltransferase TmcA, found in Pyrococcus abyssi (strain GE5 / Orsay).